The primary structure comprises 386 residues: L-lactate dehydrogenase (386 aa).

The FMN hydroxy acid dehydrogenase domain maps to 1-380; sequence MIISAASDYR…SGDALSRVTR (380 aa). Y24 provides a ligand contact to substrate. Residues S106 and Q127 each coordinate FMN. Y129 contributes to the substrate binding site. An FMN-binding site is contributed by T155. A substrate-binding site is contributed by R164. Position 251 (K251) interacts with FMN. The Proton acceptor role is filled by H275. R278 is a substrate binding site. 306 to 330 serves as a coordination point for FMN; sequence DSGIRSGLDVVRMLALGADAVLLGR.

The protein belongs to the FMN-dependent alpha-hydroxy acid dehydrogenase family. It depends on FMN as a cofactor.

The protein resides in the cell inner membrane. The enzyme catalyses (S)-lactate + A = pyruvate + AH2. Functionally, catalyzes the conversion of L-lactate to pyruvate. Is coupled to the respiratory chain. This chain is L-lactate dehydrogenase, found in Xanthomonas campestris pv. campestris (strain B100).